Reading from the N-terminus, the 85-residue chain is Large ribosomal subunit protein bL27 (85 aa).

The interval 1–21 is disordered; it reads MAHKKAGGSTRNGRDSESKRL.

This sequence belongs to the bacterial ribosomal protein bL27 family.

This is Large ribosomal subunit protein bL27 from Photorhabdus laumondii subsp. laumondii (strain DSM 15139 / CIP 105565 / TT01) (Photorhabdus luminescens subsp. laumondii).